A 119-amino-acid polypeptide reads, in one-letter code: Holo-[acyl-carrier-protein] synthase (119 aa).

Asp5 and Glu51 together coordinate Mg(2+).

Belongs to the P-Pant transferase superfamily. AcpS family. Mg(2+) serves as cofactor.

The protein localises to the cytoplasm. The enzyme catalyses apo-[ACP] + CoA = holo-[ACP] + adenosine 3',5'-bisphosphate + H(+). In terms of biological role, transfers the 4'-phosphopantetheine moiety from coenzyme A to a Ser of acyl-carrier-protein. The chain is Holo-[acyl-carrier-protein] synthase from Helicobacter pylori (strain ATCC 700392 / 26695) (Campylobacter pylori).